A 257-amino-acid chain; its full sequence is Deoxyribose-phosphate aldolase (257 aa).

Residue D102 is the Proton donor/acceptor of the active site. K166 functions as the Schiff-base intermediate with acetaldehyde in the catalytic mechanism. K198 (proton donor/acceptor) is an active-site residue.

This sequence belongs to the DeoC/FbaB aldolase family. DeoC type 2 subfamily.

Its subcellular location is the cytoplasm. The catalysed reaction is 2-deoxy-D-ribose 5-phosphate = D-glyceraldehyde 3-phosphate + acetaldehyde. Its pathway is carbohydrate degradation; 2-deoxy-D-ribose 1-phosphate degradation; D-glyceraldehyde 3-phosphate and acetaldehyde from 2-deoxy-alpha-D-ribose 1-phosphate: step 2/2. Its function is as follows. Catalyzes a reversible aldol reaction between acetaldehyde and D-glyceraldehyde 3-phosphate to generate 2-deoxy-D-ribose 5-phosphate. In Shewanella piezotolerans (strain WP3 / JCM 13877), this protein is Deoxyribose-phosphate aldolase.